The following is a 192-amino-acid chain: UPF0301 protein Rru_A3059 (192 aa).

The protein belongs to the UPF0301 (AlgH) family.

In Rhodospirillum rubrum (strain ATCC 11170 / ATH 1.1.1 / DSM 467 / LMG 4362 / NCIMB 8255 / S1), this protein is UPF0301 protein Rru_A3059.